The primary structure comprises 339 residues: Trace amine-associated receptor 2 (339 aa).

Residues 1-36 lie on the Extracellular side of the membrane; it reads MASFEAQQETFDCSEYGNGSCPENERSLGVRAAMYS. An N-linked (GlcNAc...) asparagine glycan is attached at Asn18. Cystine bridges form between Cys21-Cys185 and Cys104-Cys189. A helical membrane pass occupies residues 37 to 57; the sequence is LMACAIFITIFGNLAMIISIS. Residues 58–67 lie on the Cytoplasmic side of the membrane; the sequence is YFKQLHTPTN. The helical transmembrane segment at 68–88 threads the bilayer; sequence LLILSMAVTDFLLGFTIMPYS. Residues 89–106 are Extracellular-facing; it reads MVRSVENCWYFGLTFCKI. The chain crosses the membrane as a helical span at residues 107-127; that stretch reads HYSFDLMLSITSIFHLCSVAV. At 128 to 150 the chain is on the cytoplasmic side; the sequence is DRFYAICHPLHYCTKMTIPVVRR. A helical transmembrane segment spans residues 151 to 171; it reads LLLVCWSVPGAFAFGVVFSEA. Topologically, residues 172–195 are extracellular; it reads YADGIEGYDILVACSSSCPVMFNK. A helical membrane pass occupies residues 196–216; the sequence is LWGTTLFVAGFFTPSSMMVGI. Over 217-251 the chain is Cytoplasmic; the sequence is YGKIFAVSKKHARVIDNLPENQNNQMRKDKKAAKT. A helical transmembrane segment spans residues 252-272; sequence LGIVMGVFLLCWFPCFFTILL. Over 273–287 the chain is Extracellular; the sequence is DPFLNFSTPAVLFDA. N-linked (GlcNAc...) asparagine glycosylation is present at Asn277. A helical membrane pass occupies residues 288 to 310; that stretch reads LTWFGYFNSTCNPLIYGFFYPWF. Over 311 to 339 the chain is Cytoplasmic; sequence RRALKYILLGKIFSSHFHNTNLFTQKETE.

It belongs to the G-protein coupled receptor 1 family. In terms of tissue distribution, mainly expressed in neurons of the olfactory epithelium. Also present in the limbic brain areas receiving projection from the olfactory system and several brain regions, including the hippocampus, cerebellum, cortex, raphe nuclei, hypothalamus and habenula.

The protein resides in the cell membrane. Orphan olfactory receptor specific for trace amines. Trace amine compounds are enriched in animal body fluids and act on trace amine-associated receptors (TAARs) to elicit both intraspecific and interspecific innate behaviors. Ligand-binding causes a conformation change that triggers signaling via the G(s)-class of G-proteins which activate adenylate cyclase. May also be required to provide olfactory input into limbic brain areas to regulate emotional behaviors likely via modulation of the dopamine system. In Mus musculus (Mouse), this protein is Trace amine-associated receptor 2.